Here is a 364-residue protein sequence, read N- to C-terminus: UDP-N-acetylglucosamine--N-acetylmuramyl-(pentapeptide) pyrophosphoryl-undecaprenol N-acetylglucosamine transferase (364 aa).

UDP-N-acetyl-alpha-D-glucosamine-binding positions include 14-16, Asn-126, Arg-163, Ser-190, Ile-246, 265-270, and Gln-291; these read TGG and ALTVSE.

This sequence belongs to the glycosyltransferase 28 family. MurG subfamily.

It localises to the cell inner membrane. The catalysed reaction is di-trans,octa-cis-undecaprenyl diphospho-N-acetyl-alpha-D-muramoyl-L-alanyl-D-glutamyl-meso-2,6-diaminopimeloyl-D-alanyl-D-alanine + UDP-N-acetyl-alpha-D-glucosamine = di-trans,octa-cis-undecaprenyl diphospho-[N-acetyl-alpha-D-glucosaminyl-(1-&gt;4)]-N-acetyl-alpha-D-muramoyl-L-alanyl-D-glutamyl-meso-2,6-diaminopimeloyl-D-alanyl-D-alanine + UDP + H(+). It participates in cell wall biogenesis; peptidoglycan biosynthesis. Cell wall formation. Catalyzes the transfer of a GlcNAc subunit on undecaprenyl-pyrophosphoryl-MurNAc-pentapeptide (lipid intermediate I) to form undecaprenyl-pyrophosphoryl-MurNAc-(pentapeptide)GlcNAc (lipid intermediate II). In Shewanella loihica (strain ATCC BAA-1088 / PV-4), this protein is UDP-N-acetylglucosamine--N-acetylmuramyl-(pentapeptide) pyrophosphoryl-undecaprenol N-acetylglucosamine transferase.